An 88-amino-acid polypeptide reads, in one-letter code: Small ribosomal subunit protein uS17 (88 aa).

It belongs to the universal ribosomal protein uS17 family. Part of the 30S ribosomal subunit.

In terms of biological role, one of the primary rRNA binding proteins, it binds specifically to the 5'-end of 16S ribosomal RNA. This chain is Small ribosomal subunit protein uS17, found in Maridesulfovibrio salexigens (strain ATCC 14822 / DSM 2638 / NCIMB 8403 / VKM B-1763) (Desulfovibrio salexigens).